The primary structure comprises 409 residues: Casein kinase I isoform delta-B (409 aa).

Positions 9–277 constitute a Protein kinase domain; it reads YRLGRKIGSG…YLRQLFRNLF (269 aa). Residues 15-23 and Lys-38 contribute to the ATP site; that span reads IGSGSFGDI. Asp-128 (proton acceptor) is an active-site residue. A compositionally biased stretch (basic and acidic residues) spans 300–315; the sequence is TAEEADRERRERDERM. A disordered region spans residues 300–409; that stretch reads TAEEADRERR…NSIPFDHHGK (110 aa). The segment at 317-341 is autoinhibitory; that stretch reads HSRNPAARGIPAASGRPRPTQDGAP. 2 stretches are compositionally biased toward polar residues: residues 346–358 and 380–402; these read TPTS…SSPR and NVSS…QNSI.

The protein belongs to the protein kinase superfamily. In terms of assembly, monomer. Interacts with per1 and per2. Component of the circadian core oscillator. Autophosphorylated on serine and threonine residues.

The protein resides in the cytoplasm. It is found in the nucleus. The catalysed reaction is L-seryl-[protein] + ATP = O-phospho-L-seryl-[protein] + ADP + H(+). It catalyses the reaction L-threonyl-[protein] + ATP = O-phospho-L-threonyl-[protein] + ADP + H(+). With respect to regulation, exhibits substrate-dependent heparin activation. Its function is as follows. Casein kinases are operationally defined by their preferential utilization of acidic proteins such as caseins as substrates. Central component of the circadian clock. May act as a negative regulator of circadian rhythmicity by phosphorylating per1 and per2, which may lead to their degradation. Participates in wnt signaling. This Danio rerio (Zebrafish) protein is Casein kinase I isoform delta-B (csnk1db).